Here is a 421-residue protein sequence, read N- to C-terminus: Gamma-glutamyl phosphate reductase (421 aa).

It belongs to the gamma-glutamyl phosphate reductase family.

It is found in the cytoplasm. The catalysed reaction is L-glutamate 5-semialdehyde + phosphate + NADP(+) = L-glutamyl 5-phosphate + NADPH + H(+). Its pathway is amino-acid biosynthesis; L-proline biosynthesis; L-glutamate 5-semialdehyde from L-glutamate: step 2/2. In terms of biological role, catalyzes the NADPH-dependent reduction of L-glutamate 5-phosphate into L-glutamate 5-semialdehyde and phosphate. The product spontaneously undergoes cyclization to form 1-pyrroline-5-carboxylate. The polypeptide is Gamma-glutamyl phosphate reductase (Azotobacter vinelandii (strain DJ / ATCC BAA-1303)).